Reading from the N-terminus, the 141-residue chain is Hemoglobin subunit alpha-2 (141 aa).

The Globin domain maps to 1 to 141; it reads VLSSQDKANV…VKHVLTSKYR (141 aa). Residue His-58 coordinates O2. His-87 serves as a coordination point for heme b.

This sequence belongs to the globin family. In terms of assembly, minor hemoglobin is a heterotetramer of two alpha-2 chains and two beta-2 chains. In terms of tissue distribution, red blood cells.

Involved in oxygen transport from the lung to the various peripheral tissues. In Triturus cristatus (Great crested newt), this protein is Hemoglobin subunit alpha-2.